The primary structure comprises 199 residues: Chaperone protein TorD (199 aa).

The protein belongs to the TorD/DmsD family. TorD subfamily.

Its subcellular location is the cytoplasm. Its function is as follows. Involved in the biogenesis of TorA. Acts on TorA before the insertion of the molybdenum cofactor and, as a result, probably favors a conformation of the apoenzyme that is competent for acquiring the cofactor. This Escherichia coli O157:H7 (strain EC4115 / EHEC) protein is Chaperone protein TorD.